The primary structure comprises 331 residues: Holliday junction branch migration complex subunit RuvB (331 aa).

The segment at 1–171 is large ATPase domain (RuvB-L); sequence MTEPLDAALR…FGIIEHLEYY (171 aa). ATP is bound by residues Leu-9, Arg-10, Gly-51, Lys-54, Thr-55, Thr-56, 118–120, Arg-161, Tyr-171, and Arg-208; that span reads EDF. Thr-55 contacts Mg(2+). Residues 172-242 form a small ATPAse domain (RuvB-S) region; it reads TPEEIGTNLL…RAQDALDKLG (71 aa). Residues 245–331 are head domain (RuvB-H); that stretch reads TAGLDERDKK…AESDLGLYTN (87 aa). Residues Arg-300 and Arg-305 each contribute to the DNA site.

The protein belongs to the RuvB family. Homohexamer. Forms an RuvA(8)-RuvB(12)-Holliday junction (HJ) complex. HJ DNA is sandwiched between 2 RuvA tetramers; dsDNA enters through RuvA and exits via RuvB. An RuvB hexamer assembles on each DNA strand where it exits the tetramer. Each RuvB hexamer is contacted by two RuvA subunits (via domain III) on 2 adjacent RuvB subunits; this complex drives branch migration. In the full resolvosome a probable DNA-RuvA(4)-RuvB(12)-RuvC(2) complex forms which resolves the HJ.

It is found in the cytoplasm. It catalyses the reaction ATP + H2O = ADP + phosphate + H(+). Its function is as follows. The RuvA-RuvB-RuvC complex processes Holliday junction (HJ) DNA during genetic recombination and DNA repair, while the RuvA-RuvB complex plays an important role in the rescue of blocked DNA replication forks via replication fork reversal (RFR). RuvA specifically binds to HJ cruciform DNA, conferring on it an open structure. The RuvB hexamer acts as an ATP-dependent pump, pulling dsDNA into and through the RuvAB complex. RuvB forms 2 homohexamers on either side of HJ DNA bound by 1 or 2 RuvA tetramers; 4 subunits per hexamer contact DNA at a time. Coordinated motions by a converter formed by DNA-disengaged RuvB subunits stimulates ATP hydrolysis and nucleotide exchange. Immobilization of the converter enables RuvB to convert the ATP-contained energy into a lever motion, pulling 2 nucleotides of DNA out of the RuvA tetramer per ATP hydrolyzed, thus driving DNA branch migration. The RuvB motors rotate together with the DNA substrate, which together with the progressing nucleotide cycle form the mechanistic basis for DNA recombination by continuous HJ branch migration. Branch migration allows RuvC to scan DNA until it finds its consensus sequence, where it cleaves and resolves cruciform DNA. The chain is Holliday junction branch migration complex subunit RuvB from Deinococcus geothermalis (strain DSM 11300 / CIP 105573 / AG-3a).